A 506-amino-acid chain; its full sequence is Bifunctional purine biosynthesis protein PurH (506 aa).

One can recognise an MGS-like domain in the interval 1–142; that stretch reads MRAIISVYRK…KNFFRVVILV (142 aa).

It belongs to the PurH family.

It carries out the reaction (6R)-10-formyltetrahydrofolate + 5-amino-1-(5-phospho-beta-D-ribosyl)imidazole-4-carboxamide = 5-formamido-1-(5-phospho-D-ribosyl)imidazole-4-carboxamide + (6S)-5,6,7,8-tetrahydrofolate. It catalyses the reaction IMP + H2O = 5-formamido-1-(5-phospho-D-ribosyl)imidazole-4-carboxamide. Its pathway is purine metabolism; IMP biosynthesis via de novo pathway; 5-formamido-1-(5-phospho-D-ribosyl)imidazole-4-carboxamide from 5-amino-1-(5-phospho-D-ribosyl)imidazole-4-carboxamide (10-formyl THF route): step 1/1. The protein operates within purine metabolism; IMP biosynthesis via de novo pathway; IMP from 5-formamido-1-(5-phospho-D-ribosyl)imidazole-4-carboxamide: step 1/1. This chain is Bifunctional purine biosynthesis protein PurH, found in Aquifex aeolicus (strain VF5).